We begin with the raw amino-acid sequence, 376 residues long: N-acetyldiaminopimelate deacetylase (376 aa).

Aspartate 69 is a catalytic residue. Catalysis depends on glutamate 128, which acts as the Proton acceptor.

The protein belongs to the peptidase M20A family. N-acetyldiaminopimelate deacetylase subfamily.

It catalyses the reaction N-acetyl-(2S,6S)-2,6-diaminopimelate + H2O = (2S,6S)-2,6-diaminopimelate + acetate. It participates in amino-acid biosynthesis; L-lysine biosynthesis via DAP pathway; LL-2,6-diaminopimelate from (S)-tetrahydrodipicolinate (acetylase route): step 3/3. Its function is as follows. Catalyzes the conversion of N-acetyl-diaminopimelate to diaminopimelate and acetate. This is N-acetyldiaminopimelate deacetylase from Streptococcus pneumoniae (strain Hungary19A-6).